A 413-amino-acid polypeptide reads, in one-letter code: L-methionine gamma-lyase (413 aa).

Residues 75 to 77 (YGR) and 105 to 106 (GM) each bind pyridoxal 5'-phosphate. Y131 provides a ligand contact to substrate. 218 to 220 (SAT) contributes to the pyridoxal 5'-phosphate binding site. K221 is modified (N6-(pyridoxal phosphate)lysine). R365 provides a ligand contact to substrate. Positions 388–413 (RLPETAGAGREPSRTALRLPERAADR) are disordered.

It belongs to the trans-sulfuration enzymes family. In terms of assembly, homotetramer; dimer of active dimers. The cofactor is pyridoxal 5'-phosphate.

The enzyme catalyses L-methionine + H2O = methanethiol + 2-oxobutanoate + NH4(+). It carries out the reaction L-homocysteine + H2O = 2-oxobutanoate + hydrogen sulfide + NH4(+) + H(+). The catalysed reaction is L-cysteine + H2O = hydrogen sulfide + pyruvate + NH4(+) + H(+). Its function is as follows. Catalyzes the alpha,gamma-elimination of L-methionine to produce methanethiol, 2-oxobutanoate and ammonia. Is probably involved in L-methionine catabolism. Is also able to catalyze the alpha,gamma-elimination of L-homocysteine, and, to a lesser extent, the alpha,beta-elimination of L-cysteine. This Streptomyces avermitilis (strain ATCC 31267 / DSM 46492 / JCM 5070 / NBRC 14893 / NCIMB 12804 / NRRL 8165 / MA-4680) protein is L-methionine gamma-lyase.